The sequence spans 176 residues: MFEATTILAYKGENHSVIGGDGQVTFGNCVLKGNATKIRMLYNGKILSGFAGSTADAFTLFEMFERILENRKGDLVKSVIDFSKEWRKDKYLRRLEAMMIVMDRERLFILSGTGDVVEPEDGKIAAIGSGGNYALSAARALDKFADLPESELVRESLLIAGELCIYTNTNIKLLEL.

Residue Thr-5 is part of the active site. Na(+) contacts are provided by Gly-161, Cys-164, and Thr-167.

This sequence belongs to the peptidase T1B family. HslV subfamily. In terms of assembly, a double ring-shaped homohexamer of HslV is capped on each side by a ring-shaped HslU homohexamer. The assembly of the HslU/HslV complex is dependent on binding of ATP.

It localises to the cytoplasm. The enzyme catalyses ATP-dependent cleavage of peptide bonds with broad specificity.. Allosterically activated by HslU binding. Its function is as follows. Protease subunit of a proteasome-like degradation complex believed to be a general protein degrading machinery. This chain is ATP-dependent protease subunit HslV, found in Wolinella succinogenes (strain ATCC 29543 / DSM 1740 / CCUG 13145 / JCM 31913 / LMG 7466 / NCTC 11488 / FDC 602W) (Vibrio succinogenes).